Reading from the N-terminus, the 211-residue chain is Protein-L-isoaspartate O-methyltransferase (211 aa).

Serine 60 is a catalytic residue.

The protein belongs to the methyltransferase superfamily. L-isoaspartyl/D-aspartyl protein methyltransferase family.

The protein localises to the cytoplasm. The catalysed reaction is [protein]-L-isoaspartate + S-adenosyl-L-methionine = [protein]-L-isoaspartate alpha-methyl ester + S-adenosyl-L-homocysteine. Catalyzes the methyl esterification of L-isoaspartyl residues in peptides and proteins that result from spontaneous decomposition of normal L-aspartyl and L-asparaginyl residues. It plays a role in the repair and/or degradation of damaged proteins. This is Protein-L-isoaspartate O-methyltransferase from Pseudomonas paraeruginosa (strain DSM 24068 / PA7) (Pseudomonas aeruginosa (strain PA7)).